The following is a 1142-amino-acid chain: Nucleoporin nup131 (1142 aa).

This sequence belongs to the nucleoporin Nup133 family. In terms of assembly, component of the npc107-120 complex which consists of nup85, nup107, nup120, nup131, nup132 and seh1. Interacts with nup107.

The protein resides in the nucleus. Functions as a component of the nuclear pore complex (NPC). NPC components, collectively referred to as nucleoporins (NUPs), can play the role of both NPC structural components and of docking or interaction partners for transiently associated nuclear transport factors. Active directional transport is assured by both, a Phe-Gly (FG) repeat affinity gradient for these transport factors across the NPC and a transport cofactor concentration gradient across the nuclear envelope. The polypeptide is Nucleoporin nup131 (nup131) (Schizosaccharomyces pombe (strain 972 / ATCC 24843) (Fission yeast)).